Consider the following 400-residue polypeptide: MDEGGGGEGGSVPEDLSLEEREELLDIRRRKKELIDDIERLKYEIAEVMTEIDNLTSVEESKTTQRNKQIAMGRKKFNMDPKKGIQFLIENDLLQSSPEDVAQFLYKGEGLNKTVIGDYLGERDDFNIKVLQAFVELHEFADLNLVQALRQFLWSFRLPGEAQKIDRMMEAFASRYCLCNPGVFQSTDTCYVLSFAIIMLNTSLHNHNVRDKPTAERFITMNRGINEGGDLPEELLRNLYESIKNEPFKIPEDDGNDLTHTFFNPDREGWLLKLGGGRVKTWKRRWFILTDNCLYYFEYTTDKEPRGIIPLENLSIREVEDPRKPNCFELYNPSHKGQVIKACKTEADGRVVEGNHVVYRISAPSPEEKEEWMKSIKASISRDPFYDMLATRKRRIANKK.

Positions 14–61 (EDLSLEEREELLDIRRRKKELIDDIERLKYEIAEVMTEIDNLTSVEES) form a coiled coil. The region spanning 77–206 (FNMDPKKGIQ…IIMLNTSLHN (130 aa)) is the SEC7 domain. Residues 265 to 381 (PDREGWLLKL…WMKSIKASIS (117 aa)) form the PH domain. A 1,2-diacyl-sn-glycero-3-phospho-(1D-myo-inositol-3,4,5-trisphosphate) is bound by residues 273-281 (KLGGGRVKT), arginine 285, tyrosine 296, arginine 306, and asparagine 355. The tract at residues 392 to 400 (RKRRIANKK) is C-terminal autoinhibitory region.

In terms of assembly, interacts with TAMALIN. As to expression, present in all tissues tested, with highest protein levels in brain and adrenal.

The protein resides in the cytoplasm. The protein localises to the cytosol. It is found in the cell membrane. Functionally, promotes guanine-nucleotide exchange on ARF1. Promotes the activation of ARF factors through replacement of GDP with GTP. The polypeptide is Cytohesin-3 (Cyth3) (Rattus norvegicus (Rat)).